A 406-amino-acid polypeptide reads, in one-letter code: Succinylornithine transaminase (406 aa).

K252 is subject to N6-(pyridoxal phosphate)lysine.

Belongs to the class-III pyridoxal-phosphate-dependent aminotransferase family. AstC subfamily. Requires pyridoxal 5'-phosphate as cofactor.

It catalyses the reaction N(2)-succinyl-L-ornithine + 2-oxoglutarate = N-succinyl-L-glutamate 5-semialdehyde + L-glutamate. It functions in the pathway amino-acid degradation; L-arginine degradation via AST pathway; L-glutamate and succinate from L-arginine: step 3/5. Its function is as follows. Catalyzes the transamination of N(2)-succinylornithine and alpha-ketoglutarate into N(2)-succinylglutamate semialdehyde and glutamate. Can also act as an acetylornithine aminotransferase. This Escherichia coli O139:H28 (strain E24377A / ETEC) protein is Succinylornithine transaminase.